We begin with the raw amino-acid sequence, 368 residues long: Zinc finger protein 24 (368 aa).

K22 participates in a covalent cross-link: Glycyl lysine isopeptide (Lys-Gly) (interchain with G-Cter in SUMO2). A Glycyl lysine isopeptide (Lys-Gly) (interchain with G-Cter in SUMO1); alternate cross-link involves residue K27. K27 participates in a covalent cross-link: Glycyl lysine isopeptide (Lys-Gly) (interchain with G-Cter in SUMO2); alternate. An SCAN box domain is found at 52–134 (RQRFRQFGYQ…TVLEDLESEL (83 aa)). A phosphoserine mark is found at S132 and S142. Glycyl lysine isopeptide (Lys-Gly) (interchain with G-Cter in SUMO2) cross-links involve residues K147, K177, and K236. A C2H2-type 1 zinc finger spans residues 251-273 (HICDECGKHFSQGSALILHQRIH). The necessary and sufficient for nuclear localization stretch occupies residues 251–301 (HICDECGKHFSQGSALILHQRIHSGEKPYGCVECGKAFSRSSILVQHQRVH). The residue at position 274 (S274) is a Phosphoserine. Glycyl lysine isopeptide (Lys-Gly) (interchain with G-Cter in SUMO2) cross-links involve residues K277 and K286. C2H2-type zinc fingers lie at residues 279 to 301 (YGCVECGKAFSRSSILVQHQRVH), 307 to 329 (YKCLECGKAFSQNSGLINHQRIH), and 335 to 357 (YECVQCGKSYSQSSNLFRHQRRH). S292 is subject to Phosphoserine. The residue at position 335 (Y335) is a Phosphotyrosine. Residues K361 and K367 each participate in a glycyl lysine isopeptide (Lys-Gly) (interchain with G-Cter in SUMO2) cross-link.

The protein belongs to the krueppel C2H2-type zinc-finger protein family. Sumoylated.

It localises to the nucleus. Functionally, transcription factor required for myelination of differentiated oligodendrocytes. Required for the conversion of oligodendrocytes from the premyelinating to the myelinating state. In the developing central nervous system (CNS), involved in the maintenance in the progenitor stage by promoting the cell cycle. Specifically binds to the 5'-TCAT-3' DNA sequence. Has transcription repressor activity in vitro. This is Zinc finger protein 24 (ZNF24) from Pongo abelii (Sumatran orangutan).